A 375-amino-acid polypeptide reads, in one-letter code: Probable mitochondrial tRNA-specific 2-thiouridylase 1 (375 aa).

ATP contacts are provided by residues 7 to 14 and Met-33; that span reads GMSGGVDS. Positions 94 to 96 are interaction with target base in tRNA; it reads VPD. The active-site Nucleophile is the Cys-99. A disulfide bridge connects residues Cys-99 and Cys-205. Gly-124 is a binding site for ATP. The interval 154-156 is interaction with tRNA; the sequence is KDQ. The Cysteine persulfide intermediate role is filled by Cys-205. The interval 319 to 320 is interaction with tRNA; it reads QR.

This sequence belongs to the MnmA/TRMU family.

It localises to the mitochondrion. It carries out the reaction 5-taurinomethyluridine(34) in tRNA + S-sulfanyl-L-cysteinyl-[protein] + AH2 + ATP = 5-taurinomethyl-2-thiouridine(34) in tRNA + L-cysteinyl-[protein] + A + AMP + diphosphate + H(+). Catalyzes the 2-thiolation of uridine at the wobble position (U34) of mitochondrial tRNA(Lys), tRNA(Glu) and tRNA(Gln). Required for the formation of 5-taurinomethyl-2-thiouridine (tm5s2U) of mitochondrial tRNA(Lys), tRNA(Glu), and tRNA(Gln) at the wobble position. ATP is required to activate the C2 atom of the wobble base. The polypeptide is Probable mitochondrial tRNA-specific 2-thiouridylase 1 (Caenorhabditis elegans).